The primary structure comprises 208 residues: CASP-like protein 4A4 (208 aa).

Topologically, residues 1 to 53 (MKELKDHVVVITYGPSSEASVTASPVSQQTPSLFAYSVTPSASRFSSRRASVH) are cytoplasmic. The helical transmembrane segment at 54-74 (VIGLVLRFITMVLCFVSALSL) threads the bilayer. Over 75–92 (AVNVQRPSKRHLTQNSSS) the chain is Extracellular. N-linked (GlcNAc...) asparagine glycosylation is present at N89. Residues 93 to 113 (FASYPELLYCFGVAVIGFVYT) traverse the membrane as a helical segment. Residues 114 to 141 (SLQTFKGVCDITHRGVLISEPLSDYISF) are Cytoplasmic-facing. A helical transmembrane segment spans residues 142 to 162 (IFDQVICYLLVSSSSVAIAWI). The Extracellular portion of the chain corresponds to 163 to 176 (QHINEDAIKTLRNN). N175 carries an N-linked (GlcNAc...) asparagine glycan. The chain crosses the membrane as a helical span at residues 177-197 (SIVSVSMSFSAFLVLTLSGLL). The Cytoplasmic segment spans residues 198–208 (SGYKLCKRFMW).

It belongs to the Casparian strip membrane proteins (CASP) family. In terms of assembly, homodimer and heterodimers.

It localises to the cell membrane. In Arabidopsis thaliana (Mouse-ear cress), this protein is CASP-like protein 4A4.